A 279-amino-acid polypeptide reads, in one-letter code: 2-dehydro-3-deoxyphosphooctonate aldolase (279 aa).

This sequence belongs to the KdsA family.

It localises to the cytoplasm. The enzyme catalyses D-arabinose 5-phosphate + phosphoenolpyruvate + H2O = 3-deoxy-alpha-D-manno-2-octulosonate-8-phosphate + phosphate. It participates in carbohydrate biosynthesis; 3-deoxy-D-manno-octulosonate biosynthesis; 3-deoxy-D-manno-octulosonate from D-ribulose 5-phosphate: step 2/3. It functions in the pathway bacterial outer membrane biogenesis; lipopolysaccharide biosynthesis. The protein is 2-dehydro-3-deoxyphosphooctonate aldolase of Azoarcus sp. (strain BH72).